Here is a 296-residue protein sequence, read N- to C-terminus: Factor associated with metabolism and energy (296 aa).

Gly2 is lipidated: N-myristoyl glycine. 2 stretches are compositionally biased toward basic and acidic residues: residues 173–187 (SLHGEARINKQSPRD) and 267–281 (EQGKDEKKPRALVRT). 2 disordered regions span residues 173–204 (SLHGEARINKQSPRDHKAKKTLQSTPRNDDHD) and 256–281 (LLWDSSSSDSDEQGKDEKKPRALVRT).

The protein localises to the cell membrane. It is found in the cytoplasmic vesicle. Functionally, may be involved in tuning the metabolism, energy expenditure, and excretion processes. In Homo sapiens (Human), this protein is Factor associated with metabolism and energy.